The sequence spans 606 residues: Cryptochrome-1 (606 aa).

One can recognise a Photolyase/cryptochrome alpha/beta domain in the interval 3-132; that stretch reads VNAVHWFRKG…EVIVRISHTL (130 aa). Lysine 11 participates in a covalent cross-link: Glycyl lysine isopeptide (Lys-Gly) (interchain with G-Cter in ubiquitin). The short motif at 50 to 54 is the LIR 1 element; sequence NRWRF. At serine 71 the chain carries Phosphoserine; by AMPK. Residues 82-87 carry the LIR 2 motif; the sequence is DVFPRL. A Glycyl lysine isopeptide (Lys-Gly) (interchain with G-Cter in ubiquitin) cross-link involves residue lysine 107. Positions 151–156 match the LIR 3 motif; the sequence is KRFQTL. A Glycyl lysine isopeptide (Lys-Gly) (interchain with G-Cter in ubiquitin) cross-link involves residue lysine 159. Residue serine 247 is modified to Phosphoserine; by MAPK. Serine 252 serves as a coordination point for FAD. 2 consecutive short sequence motifs (LIR) follow at residues 255 to 260 and 271 to 276; these read LRFGCL and DLYKKV. The residue at position 280 (serine 280) is a Phosphoserine; by AMPK. Positions 285-290 match the LIR 6 motif; the sequence is SLYGQL. Glutamine 289 lines the FAD pocket. Lysine 329 is covalently cross-linked (Glycyl lysine isopeptide (Lys-Gly) (interchain with G-Cter in ubiquitin)). The LIR 7 motif lies at 335-339; that stretch reads TGFPW. Residue histidine 355 participates in FAD binding. The interval 371–470 is required for inhibition of CLOCK-BMAL1-mediated transcription; sequence WISWEEGMKV…LIGVNYPKPM (100 aa). Positions 379 to 384 match the LIR 8 motif; the sequence is KVFEEL. 387–389 contacts FAD; the sequence is DAD. 3 short sequence motifs (LIR) span residues 395 to 400, 411 to 416, and 430 to 435; these read GSWMWL, HCYCPV, and RRYLPV. Positions 471-493 are interaction with TIMELESS; that stretch reads VNHAEASRLNIERMKQIYQQLSR. Residue lysine 485 forms a Glycyl lysine isopeptide (Lys-Gly) (interchain with G-Cter in ubiquitin) linkage. 2 short sequence motifs (LIR) span residues 486 to 491 and 492 to 497; these read QIYQQL and SRYRGL. The interval 559–606 is disordered; the sequence is YAHGDSQQTHSLKQGRSSAGTGLSSGKRPSQEEDAQSVGPKVQRQSSN. Residues 563 to 586 are compositionally biased toward polar residues; the sequence is DSQQTHSLKQGRSSAGTGLSSGKR. A Glycyl lysine isopeptide (Lys-Gly) (interchain with G-Cter in ubiquitin) cross-link involves residue lysine 585. Serine 588 carries the post-translational modification Phosphoserine.

Belongs to the DNA photolyase class-1 family. In terms of assembly, component of the circadian core oscillator, which includes the CRY proteins, CLOCK or NPAS2, BMAL1 or BMAL2, CSNK1D and/or CSNK1E, TIMELESS, and the PER proteins. Interacts directly with TIMELESS. Interacts directly with PER1 and PER2; interaction with PER2 inhibits its ubiquitination and vice versa. Interacts with PER3. Interacts with FBXL21. Interacts with FBXL3. Interacts with PPP5C (via TPR repeats). Interacts with CLOCK-BMAL1 independently of PER2 and DNA. Interacts with HDAC1, HDAC2 and SIN3B. Interacts with nuclear receptors AR, NR1D1, NR3C1/GR, RORA and RORC; the interaction with at least NR3C1/GR is ligand dependent. Interacts with PRKDC. Interacts with the G protein subunit alpha GNAS; the interaction may block GPCR-mediated regulation of cAMP concentrations. Interacts with PRMT5. Interacts with EZH2. Interacts with MYBBP1A, DOCK7, HNRNPU, RPL7A, RPL8 and RPS3. Interacts with MAP1LC3B. Interacts with CLOCK. Interacts with BMAL1. Interacts weakly with HDAC3; this interaction is enhanced in the presence of FBXL3. Interacts with TRIM28, KCTD5 and DDB1. Interacts with DTL. Interacts with DDB1-CUL4A complex. Interacts with FOXO1. Interacts with PSMD2 in a KDM8-dependent manner. Interacts with KDM8 in a FBXL3-dependent manner. Interacts with PPARA. Interacts with PPARG in a ligand-dependent manner. Interacts with PPARD (via domain NR LBD) in a ligand-dependent manner. Interacts with NR1I2 (via domain NR LBD) in a ligand-dependent manner. Interacts with NR1I3, VDR and HNF4A. FAD is required as a cofactor. It depends on (6R)-5,10-methylene-5,6,7,8-tetrahydrofolate as a cofactor. Post-translationally, phosphorylation on Ser-247 by MAPK is important for the inhibition of CLOCK-BMAL1-mediated transcriptional activity. Phosphorylation by CSNK1E requires interaction with PER1 or PER2. Phosphorylation at Ser-71 and Ser-280 by AMPK decreases protein stability. Phosphorylation at Ser-588 exhibits a robust circadian rhythm with a peak at CT8, increases protein stability, prevents SCF(FBXL3)-mediated degradation and is antagonized by interaction with PRKDC. In terms of processing, ubiquitinated by the SCF(FBXL3) and SCF(FBXL21) complexes, regulating the balance between degradation and stabilization. The SCF(FBXL3) complex is mainly nuclear and mediates ubiquitination and subsequent degradation of CRY1. In contrast, cytoplasmic SCF(FBXL21) complex-mediated ubiquitination leads to stabilize CRY1 and counteract the activity of the SCF(FBXL3) complex. The SCF(FBXL3) and SCF(FBXL21) complexes probably mediate ubiquitination at different Lys residues. Ubiquitination at Lys-11 and Lys-107 are specifically ubiquitinated by the SCF(FBXL21) complex but not by the SCF(FBXL3) complex. Ubiquitination may be inhibited by PER2. Deubiquitinated by USP7. Undergoes autophagy-mediated degradation in the liver in a time-dependent manner. Autophagic degradation of CRY1 (an inhibitor of gluconeogenesis) occurs during periods of reduced feeding allowing induction of gluconeogenesis and maintenance of blood glucose levels. Expressed in cones, amacrine cells, and retinal ganglion cells of the retina (at protein level). Expressed in all tissues examined including heart, brain, spleen, lung, liver, skeletal muscle, kidney and testis. Higher levels in brain, liver and testis. In the retina, highly expressed in the ganglion cell layer (GCL) and in the inner nuclear layer (INL). Evenly distributed in central and peripheral retina. In the brain, highly expressed in the suprachiasmatic nucleus (SCN). High levels in cerebral cortical layers particularly in the pyramidial cell layer of the hippocampus, the granular cell layer of the dentate gyrus (DG) and the pyramidal cell layer of the piriform cortex (PFC).

The protein resides in the cytoplasm. Its subcellular location is the nucleus. Its activity is regulated as follows. KL001 (N-[3-(9H-carbazol-9-yl)-2-hydroxypropyl]-N-(2-furanylmethyl)-methanesulfonamide) binds to CRY1 and stabilizes it by inhibiting FBXL3- and ubiquitin-dependent degradation of CRY1 resulting in lengthening of the circadian periods. KL001-mediated CRY1 stabilization can inhibit glucagon-induced gluconeogenesis in primary hepatocytes. Functionally, transcriptional repressor which forms a core component of the circadian clock. The circadian clock, an internal time-keeping system, regulates various physiological processes through the generation of approximately 24 hour circadian rhythms in gene expression, which are translated into rhythms in metabolism and behavior. It is derived from the Latin roots 'circa' (about) and 'diem' (day) and acts as an important regulator of a wide array of physiological functions including metabolism, sleep, body temperature, blood pressure, endocrine, immune, cardiovascular, and renal function. Consists of two major components: the central clock, residing in the suprachiasmatic nucleus (SCN) of the brain, and the peripheral clocks that are present in nearly every tissue and organ system. Both the central and peripheral clocks can be reset by environmental cues, also known as Zeitgebers (German for 'timegivers'). The predominant Zeitgeber for the central clock is light, which is sensed by retina and signals directly to the SCN. The central clock entrains the peripheral clocks through neuronal and hormonal signals, body temperature and feeding-related cues, aligning all clocks with the external light/dark cycle. Circadian rhythms allow an organism to achieve temporal homeostasis with its environment at the molecular level by regulating gene expression to create a peak of protein expression once every 24 hours to control when a particular physiological process is most active with respect to the solar day. Transcription and translation of core clock components (CLOCK, NPAS2, BMAL1, BMAL2, PER1, PER2, PER3, CRY1 and CRY2) plays a critical role in rhythm generation, whereas delays imposed by post-translational modifications (PTMs) are important for determining the period (tau) of the rhythms (tau refers to the period of a rhythm and is the length, in time, of one complete cycle). A diurnal rhythm is synchronized with the day/night cycle, while the ultradian and infradian rhythms have a period shorter and longer than 24 hours, respectively. Disruptions in the circadian rhythms contribute to the pathology of cardiovascular diseases, cancer, metabolic syndromes and aging. A transcription/translation feedback loop (TTFL) forms the core of the molecular circadian clock mechanism. Transcription factors, CLOCK or NPAS2 and BMAL1 or BMAL2, form the positive limb of the feedback loop, act in the form of a heterodimer and activate the transcription of core clock genes and clock-controlled genes (involved in key metabolic processes), harboring E-box elements (5'-CACGTG-3') within their promoters. The core clock genes: PER1/2/3 and CRY1/2 which are transcriptional repressors form the negative limb of the feedback loop and interact with the CLOCK|NPAS2-BMAL1|BMAL2 heterodimer inhibiting its activity and thereby negatively regulating their own expression. This heterodimer also activates nuclear receptors NR1D1/2 and RORA/B/G, which form a second feedback loop and which activate and repress BMAL1 transcription, respectively. CRY1 and CRY2 have redundant functions but also differential and selective contributions at least in defining the pace of the SCN circadian clock and its circadian transcriptional outputs. More potent transcriptional repressor in cerebellum and liver than CRY2, though more effective in lengthening the period of the SCN oscillator. On its side, CRY2 seems to play a critical role in tuning SCN circadian period by opposing the action of CRY1. With CRY2, is dispensable for circadian rhythm generation but necessary for the development of intercellular networks for rhythm synchrony. Capable of translocating circadian clock core proteins such as PER proteins to the nucleus. Interacts with CLOCK-BMAL1 independently of PER proteins and is found at CLOCK-BMAL1-bound sites, suggesting that CRY may act as a molecular gatekeeper to maintain CLOCK-BMAL1 in a poised and repressed state until the proper time for transcriptional activation. Represses the CLOCK-BMAL1 induced transcription of BHLHE40/DEC1, ATF4, MTA1, KLF10 and NAMPT. May repress circadian target genes expression in collaboration with HDAC1 and HDAC2 through histone deacetylation. Mediates the clock-control activation of ATR and modulates ATR-mediated DNA damage checkpoint. In liver, mediates circadian regulation of cAMP signaling and gluconeogenesis by binding to membrane-coupled G proteins and blocking glucagon-mediated increases in intracellular cAMP concentrations and CREB1 phosphorylation. Inhibits hepatic gluconeogenesis by decreasing nuclear FOXO1 levels that down-regulates gluconeogenic gene expression. Besides its role in the maintenance of the circadian clock, is also involved in the regulation of other processes. Represses glucocorticoid receptor NR3C1/GR-induced transcriptional activity by binding to glucocorticoid response elements (GREs). Plays a key role in glucose and lipid metabolism modulation, in part, through the transcriptional regulation of genes involved in these pathways, such as LEP or ACSL4. Represses PPARD and its target genes in the skeletal muscle and limits exercise capacity. Plays an essential role in the generation of circadian rhythms in the retina. Represses the transcriptional activity of NR1I2. This Mus musculus (Mouse) protein is Cryptochrome-1 (Cry1).